An 821-amino-acid chain; its full sequence is MASSEAEWVTIANNLLFKCHIHLRIHKLQDCDANVFIALYQSILGEKVPDLIVIPRSQEDNAHNVQAVIDSLALDYLQVSLSHITGENIVKGDKGSIKNLLEIFDGLLEYLTEHISESSHNRSASEQFCRDSRGEEPVEELESAKESSWRKVPFMRCSFSPDALGPTWDEEEAESTGEIIRLGDTAHTFSLRSNGAQNSMNFWSRKASTSGIRPPEEMLNPGLSSFLFKNGPTCEEEEAPPIHMATSARKLGEPIRAAIPLHPPYHPPEPRAPCPIGKEYLCSGHYLSTPASGEHRAPSVEPGDVFLTSTLCKDDDQETDLDLTESSKTRRLSKGERSENRAVAPSEYPPFPQKARKRLTEQELHAMSEKLSQRLSELDWMLKTALGDRATGEAHGKDGGAGDEEAHSANEEMLSQHSDSVMEYGPRKPRPGFSMHRKAPYRSHSLSPSSVNKHRQSEKERKKQHKSKGTDTHHFQAKALTEAFERELRKNKVQENVGLRGIREEEEETEKSYKEAFAKGTTKQSQVQKIYSRKTAAPTPKGGLLKSSKASPMKVNEHSLLSLMLEQFPFLYVSDPTLTKMWKQQMAQVEQLRREAQRENRSKKKLQDEIEEALRRHDLLTALVKKEYDHNKRLQDFKDRIHKQRLTQSKIKENRHQSVRARKYYDDYRVQLRAKMMKMRTREEMIFKKLFEEGLQIQKQRLRDLRNYAKEKRSEEKRQHQNELDSMENYYKDQFSLLAEAISQGRQELKARQRSQAQTLHKVKRELRAKMEKEIEQLQHLITQSDDDAFFRELEAERFKARLQLASFQYSKNPFPRGQTP.

Disordered stretches follow at residues 310–354 (TLCK…FPQK), 390–474 (ATGE…DTHH), and 514–550 (KEAF…SSKA). 2 stretches are compositionally biased toward basic and acidic residues: residues 325–340 (ESSK…RSEN) and 390–410 (ATGE…HSAN). The span at 427–441 (RKPRPGFSMHRKAPY) shows a compositional bias: basic residues. S445, S447, and S449 each carry phosphoserine. Coiled coils occupy residues 578 to 627 (LTKM…VKKE) and 695 to 789 (LQIQ…DDDA).

It localises to the cytoplasm. It is found in the cytoskeleton. The protein resides in the microtubule organizing center. The protein localises to the centrosome. Its subcellular location is the spindle pole. The protein is Centrosomal protein of 95 kDa (Cep95) of Rattus norvegicus (Rat).